A 102-amino-acid chain; its full sequence is Small ribosomal subunit protein uS10 (102 aa).

Belongs to the universal ribosomal protein uS10 family. In terms of assembly, part of the 30S ribosomal subunit.

In terms of biological role, involved in the binding of tRNA to the ribosomes. This chain is Small ribosomal subunit protein uS10, found in Brevibacillus brevis (strain 47 / JCM 6285 / NBRC 100599).